We begin with the raw amino-acid sequence, 1405 residues long: DNA-directed RNA polymerase III subunit rpc1 (1405 aa).

The Zn(2+) site is built by Cys66, Cys69, Cys76, His79, Cys106, Cys109, and Cys153. 3 residues coordinate Mg(2+): Asp493, Asp495, and Asp497. The interval Pro838–Glu850 is bridging helix.

The protein belongs to the RNA polymerase beta' chain family. In terms of assembly, component of the RNA polymerase III (Pol III) complex consisting of 17 subunits.

It is found in the nucleus. The catalysed reaction is RNA(n) + a ribonucleoside 5'-triphosphate = RNA(n+1) + diphosphate. In terms of biological role, DNA-dependent RNA polymerase catalyzes the transcription of DNA into RNA using the four ribonucleoside triphosphates as substrates. Largest and catalytic core component of RNA polymerase III which synthesizes small RNAs, such as 5S rRNA and tRNAs. Forms the polymerase active center together with the second largest subunit. A single-stranded DNA template strand of the promoter is positioned within the central active site cleft of Pol III. A bridging helix emanates from RPC1 and crosses the cleft near the catalytic site and is thought to promote translocation of Pol III by acting as a ratchet that moves the RNA-DNA hybrid through the active site by switching from straight to bent conformations at each step of nucleotide addition. This Schizosaccharomyces pombe (strain 972 / ATCC 24843) (Fission yeast) protein is DNA-directed RNA polymerase III subunit rpc1 (rpc1).